Here is a 161-residue protein sequence, read N- to C-terminus: Nucleotide-binding protein Daci_4781 (161 aa).

The protein belongs to the YajQ family.

Functionally, nucleotide-binding protein. In Delftia acidovorans (strain DSM 14801 / SPH-1), this protein is Nucleotide-binding protein Daci_4781.